The chain runs to 177 residues: Bifunctional protein PyrR (177 aa).

Substrate-binding positions include 42 to 43 (SR), 104 to 112 (DDVLYTGRT), and Arg137. A PRPP-binding motif is present at residues 100–112 (VVIVDDVLYTGRT).

Belongs to the purine/pyrimidine phosphoribosyltransferase family. PyrR subfamily.

It carries out the reaction UMP + diphosphate = 5-phospho-alpha-D-ribose 1-diphosphate + uracil. Functionally, regulates the transcription of the pyrimidine nucleotide (pyr) operon in response to exogenous pyrimidines. Also displays a weak uracil phosphoribosyltransferase activity which is not physiologically significant. This chain is Bifunctional protein PyrR, found in Fusobacterium nucleatum subsp. nucleatum (strain ATCC 25586 / DSM 15643 / BCRC 10681 / CIP 101130 / JCM 8532 / KCTC 2640 / LMG 13131 / VPI 4355).